The following is a 766-amino-acid chain: Nucleolar complex protein 2 (766 aa).

Over residues 1 to 12 the composition is skewed to basic residues; it reads MKLATKKIKTLG. Disordered regions lie at residues 1–73, 100–154, and 674–766; these read MKLA…EELE, DTDD…DEED, and KTGV…LNEW. The span at 14–29 shows a compositional bias: basic and acidic residues; the sequence is SKPDLSKKKPAKDAIR. The segment covering 33–42 has biased composition (polar residues); the sequence is PQTTSETKVT. The span at 58-67 shows a compositional bias: basic residues; sequence KTTKKGFKKS. The span at 100–115 shows a compositional bias: acidic residues; that stretch reads DTDDDDDEEGDEEDKE. The residue at position 101 (Thr101) is a Phosphothreonine. A compositionally biased stretch (basic and acidic residues) spans 130-140; sequence EKYHKPSKDLE. Acidic residues predominate over residues 141–154; sequence VASDESDFEVDEED. Phosphoserine occurs at positions 143, 146, 691, 693, and 705. The span at 706–720 shows a compositional bias: acidic residues; sequence DDDDDEDVQEEEEVE. The segment covering 757–766 has biased composition (basic and acidic residues); the sequence is IVKDLDLNEW.

Belongs to the NOC2 family.

It localises to the nucleus. The protein is Nucleolar complex protein 2 of Drosophila melanogaster (Fruit fly).